A 414-amino-acid polypeptide reads, in one-letter code: Serine hydroxymethyltransferase (414 aa).

Residues leucine 121 and 125–127 (GHL) each bind (6S)-5,6,7,8-tetrahydrofolate. Lysine 229 carries the N6-(pyridoxal phosphate)lysine modification.

Belongs to the SHMT family. In terms of assembly, homodimer. Requires pyridoxal 5'-phosphate as cofactor.

Its subcellular location is the cytoplasm. It carries out the reaction (6R)-5,10-methylene-5,6,7,8-tetrahydrofolate + glycine + H2O = (6S)-5,6,7,8-tetrahydrofolate + L-serine. It functions in the pathway one-carbon metabolism; tetrahydrofolate interconversion. Its pathway is amino-acid biosynthesis; glycine biosynthesis; glycine from L-serine: step 1/1. Functionally, catalyzes the reversible interconversion of serine and glycine with tetrahydrofolate (THF) serving as the one-carbon carrier. This reaction serves as the major source of one-carbon groups required for the biosynthesis of purines, thymidylate, methionine, and other important biomolecules. Also exhibits THF-independent aldolase activity toward beta-hydroxyamino acids, producing glycine and aldehydes, via a retro-aldol mechanism. The sequence is that of Serine hydroxymethyltransferase from Polaromonas naphthalenivorans (strain CJ2).